Consider the following 3434-residue polypeptide: Genome polyprotein (3434 aa).

At 1–106 (MSKKPGGPGR…NRGTKKKRGN (106 aa)) the chain is on the cytoplasmic side. Residues 2 to 15 (SKKPGGPGRNRAIN) form an interaction with host EXOC1 region. Residues 37-72 (LLDGRGPVRFVLALMTFFKFTALAPTKALLGRWKRI) are hydrophobic; homodimerization of capsid protein C. A propeptide spans 105–126 (GNNGPGLVMIITLMTVVSMVSS) (ER anchor for the capsid protein C, removed in mature form by serine protease NS3). A helical membrane pass occupies residues 107–126 (NGPGLVMIITLMTVVSMVSS). Topologically, residues 127–248 (LKLSNFQGKV…DSTKASRYLM (122 aa)) are extracellular. Asn-141 carries an N-linked (GlcNAc...) asparagine; by host glycan. The chain crosses the membrane as a helical span at residues 249 to 273 (KTENWIIRNPGYAFVAVLLGWMLGS). Topologically, residues 274 to 278 (NNGQR) are cytoplasmic. Residues 279–293 (VVFVVLLLLVAPAYS) traverse the membrane as a helical segment. The Extracellular segment spans residues 294–745 (FNCLGMSNRD…QVFGGAFRTL (452 aa)). 8 disulfide bridges follow: Cys-296–Cys-323, Cys-353–Cys-409, Cys-353–Cys-414, Cys-367–Cys-398, Cys-385–Cys-409, Cys-385–Cys-414, Cys-483–Cys-580, and Cys-597–Cys-628. The segment at 391-404 (DRGWGNGCGLFGKG) is fusion peptide. The helical transmembrane segment at 746-766 (FGGMSWITQGLMGALLLWMGV) threads the bilayer. The Cytoplasmic portion of the chain corresponds to 767–772 (NARDRS). Residues 773 to 793 (IALVMLATGGVLLFLATNVHA) form a helical membrane-spanning segment. The Extracellular portion of the chain corresponds to 794-1218 (DSGCAIDVGR…AFAEANSGGD (425 aa)). 2 disulfides stabilise this stretch: Cys-797–Cys-808 and Cys-848–Cys-936. 3 N-linked (GlcNAc...) asparagine; by host glycosylation sites follow: Asn-923, Asn-968, and Asn-1000. Cystine bridges form between Cys-972-Cys-1016, Cys-1073-Cys-1122, Cys-1084-Cys-1105, Cys-1084-Cys-1106, Cys-1105-Cys-1109, and Cys-1106-Cys-1109. The helical transmembrane segment at 1219 to 1239 (VVHLALIAAFKIQPGFLAMTF) threads the bilayer. At 1240-1249 (LRGKWTNQEN) the chain is on the cytoplasmic side. A helical transmembrane segment spans residues 1250 to 1270 (ILLALGAAFFQMAATDLNFSL). Residues 1271–1286 (PGILNATATAWMLLRA) lie on the Lumenal side of the membrane. Residues 1287 to 1307 (ATQPSTSAIVMPLLCLLAPGM) traverse the membrane as a helical segment. Arg-1308 is a topological domain (cytoplasmic). The chain crosses the membrane as a helical span at residues 1309-1329 (LLYLDTYRITLIIIGICSLIG). Over 1330–1340 (ERRRAAAKKKG) the chain is Lumenal. Residues 1341–1361 (AVLLGLALTSTGQFSASVMAA) traverse the membrane as a helical segment. The Cytoplasmic portion of the chain corresponds to 1362–1373 (GLMACNPNKKRG). A helical transmembrane segment spans residues 1374 to 1394 (WPATEVLTAVGLMFAIVGGLA). The Lumenal segment spans residues 1395–1397 (ELD). Residues 1398–1418 (VDSMSIPFVLAGLMAVSYTIS) traverse the membrane as a helical segment. Residues 1419–1475 (GKSTDLWLERAADITWETDAAITGTSQRLDVKLDDDGDFHLINDPGVPWKIWVIRMT) lie on the Cytoplasmic side of the membrane. Positions 1426-1465 (LERAADITWETDAAITGTSQRLDVKLDDDGDFHLINDPGV) are interacts with and activates NS3 protease. Positions 1476–1496 (ALGFAAWTPWAIIPAGIGYWL) form an intramembrane region, helical. The Cytoplasmic portion of the chain corresponds to 1497–2173 (TVKYAKRGGV…MALEELPDAL (677 aa)). Positions 1504 to 1681 (GGVFWDTPAP…EREEEPVPEA (178 aa)) constitute a Peptidase S7 domain. Active-site charge relay system; for serine protease NS3 activity residues include His-1554, Asp-1578, and Ser-1638. Residues 1684-1840 (ADMLRKKQLT…DTNAPVTDIQ (157 aa)) form the Helicase ATP-binding domain. Residues 1688–1691 (RKKQ) form an important for RNA-binding region. Position 1697–1704 (1697–1704 (LHPGAGKT)) interacts with ATP. The DEAH box motif lies at 1788–1791 (DEAH). A Helicase C-terminal domain is found at 1851 to 2016 (GFEWITEYTG…GLVAQMYGPE (166 aa)). Lys-1892 carries the post-translational modification N6-acetyllysine; by host. The interval 1956–1980 (ASAAQRRGRVGRNPSQIGDEYHYGG) is disordered. The regulates the ATPase activity of NS3 helicase stretch occupies residues 2167-2171 (EELPD). The helical transmembrane segment at 2174–2194 (ETITLIVALAVMTAGVFLLLV) threads the bilayer. Residues 2195-2198 (QRRG) are Lumenal-facing. The segment at residues 2199–2219 (IGKLGLGGMVLGLATFFLWMA) is an intramembrane region (helical). Position 2220 (Asp-2220) is a topological domain, lumenal. Residues 2221–2241 (VSGTKIAGTLLLALLMMIVLI) traverse the membrane as a helical segment. Topologically, residues 2242 to 2256 (PEPEKQRSQTDNQLA) are cytoplasmic. A helical transmembrane segment spans residues 2257–2277 (VFLICVLLVVGVVAANEYGML). The Lumenal portion of the chain corresponds to 2278 to 2313 (ERTKSDLGKIFSSTRQPQSALPLPSMNALALDLRPA). The helical intramembrane region spans 2314–2334 (TAWALYGGSTVVLTPLIKHLV). The Lumenal segment spans residues 2335-2368 (TSEYITTSLASISAQAGSLFNLPRGLPFTELDFT). A helical transmembrane segment spans residues 2369–2389 (VVLVFLGCWGQVSLTTLITAA). The Cytoplasmic segment spans residues 2390–2446 (ALATLHYGYMLPGWQAEALRAAQRRTAAGIMKNAVVDGLVATDVPELERTTPLMQKK). The chain crosses the membrane as a helical span at residues 2447 to 2467 (VGQILLIGVSAAALLVNPCVT). At 2468-2471 (TVRE) the chain is on the lumenal side. The helical transmembrane segment at 2472–2492 (AGILISAALLTLWDNGAIAVW) threads the bilayer. Residues 2493–3434 (NSTTATGLCH…EVNVQEDRVL (942 aa)) lie on the Cytoplasmic side of the membrane. In terms of domain architecture, mRNA cap 0-1 NS5-type MT spans 2530 to 2795 (GRPGGRTLGE…DVNLGSGTRA (266 aa)). A disordered region spans residues 2567-2587 (SAARKARRDGNKTGGHPVSRG). Residue Ser-2585 coordinates S-adenosyl-L-methionine. Ser-2585 carries the post-translational modification Phosphoserine. Catalysis depends on Lys-2590, which acts as the For 2'-O-MTase activity. The S-adenosyl-L-methionine site is built by Gly-2615, Trp-2616, Thr-2633, Lys-2634, Asp-2660, and Val-2661. Residue Asp-2675 is the For 2'-O-MTase activity of the active site. Position 2676 (Ile-2676) interacts with S-adenosyl-L-methionine. Residues Lys-2711 and Glu-2747 each act as for 2'-O-MTase activity in the active site. Tyr-2749 lines the S-adenosyl-L-methionine pocket. Positions 2969, 2973, 2978, and 2981 each coordinate Zn(2+). Positions 3059 to 3211 (GKMYADDTAG…KPLDDRFANA (153 aa)) constitute a RdRp catalytic domain. Zn(2+) is bound by residues His-3246, Cys-3262, and Cys-3381.

This sequence in the N-terminal section; belongs to the class I-like SAM-binding methyltransferase superfamily. mRNA cap 0-1 NS5-type methyltransferase family. In terms of assembly, homodimer. Interacts (via N-terminus) with host EXOC1 (via C-terminus); this interaction results in EXOC1 degradation through the proteasome degradation pathway. As to quaternary structure, forms heterodimers with envelope protein E in the endoplasmic reticulum and Golgi. Homodimer; in the endoplasmic reticulum and Golgi. Interacts with protein prM. Interacts with non-structural protein 1. In terms of assembly, homodimer; Homohexamer when secreted. Interacts with envelope protein E. NS1 interacts with NS4B. Interacts with host complement protein CFH; this interaction leads to the degradation of C3. As to quaternary structure, interacts (via N-terminus) with serine protease NS3. Forms a heterodimer with serine protease NS3. May form homooligomers. In terms of assembly, forms a heterodimer with NS2B. Interacts with non-structural protein 2A (via N-terminus). Interacts with NS4B. Interacts with unphosphorylated RNA-directed RNA polymerase NS5; this interaction stimulates RNA-directed RNA polymerase NS5 guanylyltransferase activity. As to quaternary structure, interacts with serine protease NS3. Homodimer. Interacts with host STAT2; this interaction inhibits the phosphorylation of the latter, and, when all viral proteins are present (polyprotein), targets STAT2 for degradation. Interacts with serine protease NS3. In terms of processing, specific enzymatic cleavages in vivo yield mature proteins. Cleavages in the lumen of endoplasmic reticulum are performed by host signal peptidase, whereas cleavages in the cytoplasmic side are performed by serine protease NS3. Signal cleavage at the 2K-4B site requires a prior NS3 protease-mediated cleavage at the 4A-2K site. Cleaved in post-Golgi vesicles by a host furin, releasing the mature small envelope protein M, and peptide pr. This cleavage is incomplete as up to 30% of viral particles still carry uncleaved prM. Post-translationally, N-glycosylated. In terms of processing, N-glycosylated. The excreted form is glycosylated and this is required for efficient secretion of the protein from infected cells. Acetylated by host KAT5. Acetylation modulates NS3 RNA-binding and unwinding activities and plays an important positive role for viral replication. Post-translationally, phosphorylated on serines residues. This phosphorylation may trigger NS5 nuclear localization.

The protein resides in the virion. The protein localises to the host nucleus. It is found in the host cytoplasm. Its subcellular location is the host perinuclear region. It localises to the secreted. The protein resides in the virion membrane. The protein localises to the host endoplasmic reticulum membrane. The enzyme catalyses Selective hydrolysis of -Xaa-Xaa-|-Yaa- bonds in which each of the Xaa can be either Arg or Lys and Yaa can be either Ser or Ala.. It catalyses the reaction RNA(n) + a ribonucleoside 5'-triphosphate = RNA(n+1) + diphosphate. It carries out the reaction a ribonucleoside 5'-triphosphate + H2O = a ribonucleoside 5'-diphosphate + phosphate + H(+). The catalysed reaction is ATP + H2O = ADP + phosphate + H(+). The enzyme catalyses a 5'-end (5'-triphosphoguanosine)-ribonucleoside in mRNA + S-adenosyl-L-methionine = a 5'-end (N(7)-methyl 5'-triphosphoguanosine)-ribonucleoside in mRNA + S-adenosyl-L-homocysteine. It catalyses the reaction a 5'-end (N(7)-methyl 5'-triphosphoguanosine)-ribonucleoside in mRNA + S-adenosyl-L-methionine = a 5'-end (N(7)-methyl 5'-triphosphoguanosine)-(2'-O-methyl-ribonucleoside) in mRNA + S-adenosyl-L-homocysteine + H(+). Functionally, plays a role in virus budding by binding to the cell membrane and gathering the viral RNA into a nucleocapsid that forms the core of a mature virus particle. During virus entry, may induce genome penetration into the host cytoplasm after hemifusion induced by the surface proteins. Can migrate to the cell nucleus where it modulates host functions. Overcomes the anti-viral effects of host EXOC1 by sequestering and degrading the latter through the proteasome degradation pathway. Its function is as follows. Inhibits RNA silencing by interfering with host Dicer. In terms of biological role, prevents premature fusion activity of envelope proteins in trans-Golgi by binding to envelope protein E at pH6.0. After virion release in extracellular space, gets dissociated from E dimers. Acts as a chaperone for envelope protein E during intracellular virion assembly by masking and inactivating envelope protein E fusion peptide. prM is the only viral peptide matured by host furin in the trans-Golgi network probably to avoid catastrophic activation of the viral fusion activity in acidic Golgi compartment prior to virion release. prM-E cleavage is inefficient, and many virions are only partially matured. These uncleaved prM would play a role in immune evasion. Functionally, may play a role in virus budding. Exerts cytotoxic effects by activating a mitochondrial apoptotic pathway through M ectodomain. May display a viroporin activity. Its function is as follows. Binds to host cell surface receptor and mediates fusion between viral and cellular membranes. Envelope protein is synthesized in the endoplasmic reticulum in the form of heterodimer with protein prM. They play a role in virion budding in the ER, and the newly formed immature particle is covered with 60 spikes composed of heterodimer between precursor prM and envelope protein E. The virion is transported to the Golgi apparatus where the low pH causes dissociation of PrM-E heterodimers and formation of E homodimers. prM-E cleavage is inefficient, and many virions are only partially matured. These uncleaved prM would play a role in immune evasion. In terms of biological role, involved in immune evasion, pathogenesis and viral replication. Once cleaved off the polyprotein, is targeted to three destinations: the viral replication cycle, the plasma membrane and the extracellular compartment. Essential for viral replication. Required for formation of the replication complex and recruitment of other non-structural proteins to the ER-derived membrane structures. Excreted as a hexameric lipoparticle that plays a role against host immune response. Antagonizing the complement function. Binds to the host macrophages and dendritic cells. Inhibits signal transduction originating from Toll-like receptor 3 (TLR3). Component of the viral RNA replication complex that functions in virion assembly and antagonizes the host alpha/beta interferon antiviral response. Functionally, required cofactor for the serine protease function of NS3. May have membrane-destabilizing activity and form viroporins. Its function is as follows. Displays three enzymatic activities: serine protease, NTPase and RNA helicase. NS3 serine protease, in association with NS2B, performs its autocleavage and cleaves the polyprotein at dibasic sites in the cytoplasm: C-prM, NS2A-NS2B, NS2B-NS3, NS3-NS4A, NS4A-2K and NS4B-NS5. NS3 RNA helicase binds RNA and unwinds dsRNA in the 3' to 5' direction. In terms of biological role, regulates the ATPase activity of the NS3 helicase activity. NS4A allows NS3 helicase to conserve energy during unwinding. Functions as a signal peptide for NS4B and is required for the interferon antagonism activity of the latter. Functionally, induces the formation of ER-derived membrane vesicles where the viral replication takes place. Inhibits interferon (IFN)-induced host STAT1 phosphorylation and nuclear translocation, thereby preventing the establishment of cellular antiviral state by blocking the IFN-alpha/beta pathway. Inhibits STAT2 translocation in the nucleus after IFN-alpha treatment. Its function is as follows. Replicates the viral (+) and (-) RNA genome, and performs the capping of genomes in the cytoplasm. NS5 methylates viral RNA cap at guanine N-7 and ribose 2'-O positions. Besides its role in RNA genome replication, also prevents the establishment of cellular antiviral state by blocking the interferon-alpha/beta (IFN-alpha/beta) signaling pathway. Inhibits host TYK2 and STAT2 phosphorylation, thereby preventing activation of JAK-STAT signaling pathway. In Usutu virus (USUV), this protein is Genome polyprotein.